The primary structure comprises 1052 residues: Lateral signaling target protein 2 homolog (1052 aa).

5 disordered regions span residues Tyr311–His348, Pro379–Ser455, Asp506–Ala539, Leu551–Phe678, and Asn814–Gly973. Low complexity-rich tracts occupy residues Ser312–Ser346, Pro379–Ala392, and Pro400–Ala419. The segment covering Ser422 to Ser455 has biased composition (acidic residues). The span at Pro554–Thr574 shows a compositional bias: polar residues. 2 positions are modified to phosphoserine: Ser555 and Ser556. Basic residues-rich tracts occupy residues Arg588–Gln614 and Ser625–Arg644. A compositionally biased stretch (polar residues) spans Ser652–Ile661. The segment covering Asn824–Ser842 has biased composition (low complexity). The residue at position 854 (Ser854) is a Phosphoserine. A compositionally biased stretch (low complexity) spans Gln872–Ser915. Over residues Ser926–Gly935 the composition is skewed to polar residues. A compositionally biased stretch (low complexity) spans Ser936–Thr963. The FYVE-type zinc finger occupies Asp972–Val1032. Zn(2+)-binding residues include Cys978, Cys981, Cys994, Cys997, Cys1002, Cys1005, Cys1024, and Cys1027.

The protein belongs to the lst-2 family.

Its function is as follows. Negative regulator of epidermal growth factor receptor (EGFR) signaling. This Drosophila virilis (Fruit fly) protein is Lateral signaling target protein 2 homolog.